The primary structure comprises 220 residues: Ribose-5-phosphate isomerase A (220 aa).

Substrate contacts are provided by residues 25-28, 80-83, and 93-96; these read TGST, DGAD, and KGGG. Glutamate 102 serves as the catalytic Proton acceptor. Lysine 120 is a substrate binding site.

Belongs to the ribose 5-phosphate isomerase family. As to quaternary structure, homodimer.

It carries out the reaction aldehydo-D-ribose 5-phosphate = D-ribulose 5-phosphate. The protein operates within carbohydrate degradation; pentose phosphate pathway; D-ribose 5-phosphate from D-ribulose 5-phosphate (non-oxidative stage): step 1/1. Functionally, catalyzes the reversible conversion of ribose-5-phosphate to ribulose 5-phosphate. In Bacillus thuringiensis subsp. konkukian (strain 97-27), this protein is Ribose-5-phosphate isomerase A.